A 264-amino-acid polypeptide reads, in one-letter code: MNIKKGKFLETILAEKRLEIAKMPEEQVGKVRQTYNFYDYLKEHSDQLQVIAEVKKASPSLGDINLEVDIVDQAKNYEQAGAAMISVLTDPVFFKGNIEYLCEISENVQIPTLNKDFIIDKKQINRAVNAGATVILLIVAVFENQYPKLQNLYNYALSLGLEVLVETHNKAELEIAHQLGAKIIGVNNRNLKTFEVILQNSVDLTPYFKEDSIYISESGIFSANEAQKVSDTFNGILVGTALMQSENLEKSLKDLKVKRKTNEN.

The protein belongs to the TrpC family.

The catalysed reaction is 1-(2-carboxyphenylamino)-1-deoxy-D-ribulose 5-phosphate + H(+) = (1S,2R)-1-C-(indol-3-yl)glycerol 3-phosphate + CO2 + H2O. It participates in amino-acid biosynthesis; L-tryptophan biosynthesis; L-tryptophan from chorismate: step 4/5. The polypeptide is Indole-3-glycerol phosphate synthase (trpC) (Lactococcus lactis subsp. lactis (strain IL1403) (Streptococcus lactis)).